Consider the following 172-residue polypeptide: Large ribosomal subunit protein uL10 (172 aa).

This sequence belongs to the universal ribosomal protein uL10 family. In terms of assembly, part of the ribosomal stalk of the 50S ribosomal subunit. The N-terminus interacts with L11 and the large rRNA to form the base of the stalk. The C-terminus forms an elongated spine to which L12 dimers bind in a sequential fashion forming a multimeric L10(L12)X complex.

Forms part of the ribosomal stalk, playing a central role in the interaction of the ribosome with GTP-bound translation factors. This is Large ribosomal subunit protein uL10 from Chlorobium phaeovibrioides (strain DSM 265 / 1930) (Prosthecochloris vibrioformis (strain DSM 265)).